We begin with the raw amino-acid sequence, 245 residues long: MANKRLKKKLETKRKKSLLVSEGYSKKETKKLKGRELETVYKKKAHNRKNRERAREIANLAKQWGLSPSKYNSWKKLLPEIERIKKEQDREAPFLLIYYQDFTGETDSKFIYDFKKRNNTRSRSQITESIIGWLQNAHNKLFLGRVAIRIVPKRDVSKTNTLWRNHGYVKIYEGQGKELSKLLTAIETIMVGVYDVKERDKYLKELVAKLRSLPYEKAKKNAKEIQKIYDTKSYKKESWDNDDYY.

Positions 4–55 (KRLKKKLETKRKKSLLVSEGYSKKETKKLKGRELETVYKKKAHNRKNRERAR) match the Nuclear localization signal motif. Position 194 is an O-(5'-phospho-DNA)-tyrosine (tyrosine 194).

Interacts with the DNA-binding protein P1.

Its subcellular location is the virion. Acts as a primer for viral genomic replication. DNA terminal protein is covalently linked to the 5'-ends of both strands of the genome through a phosphodiester bond between the beta-hydroxyl group of a tyrosine residue and the 5'-phosphate of the terminal deoxythymidylate. This protein is essential for DNA replication and is involved in the priming of DNA elongation. The polypeptide is DNA terminal protein (Bacillus thuringiensis (Bacillus thuringiensis bacteriophage Bam35c)).